We begin with the raw amino-acid sequence, 428 residues long: D-amino acid dehydrogenase (428 aa).

Valine 3–tyrosine 17 provides a ligand contact to FAD.

It belongs to the DadA oxidoreductase family. The cofactor is FAD.

The catalysed reaction is a D-alpha-amino acid + A + H2O = a 2-oxocarboxylate + AH2 + NH4(+). Its pathway is amino-acid degradation; D-alanine degradation; NH(3) and pyruvate from D-alanine: step 1/1. Oxidative deamination of D-amino acids. The protein is D-amino acid dehydrogenase of Burkholderia mallei (strain NCTC 10247).